Reading from the N-terminus, the 245-residue chain is Small ribosomal subunit protein uS2 (245 aa).

Belongs to the universal ribosomal protein uS2 family.

The chain is Small ribosomal subunit protein uS2 from Pseudomonas entomophila (strain L48).